The primary structure comprises 683 residues: Leishmanolysin-like peptidase (683 aa).

Residue His257 participates in Zn(2+) binding. Glu258 is a catalytic residue. His261 and His364 together coordinate Zn(2+).

It belongs to the peptidase M8 family. Zn(2+) is required as a cofactor.

The protein resides in the cytoplasm. Its function is as follows. Essential for the coordination of mitotic progression, and also plays a role in cell migration. This chain is Leishmanolysin-like peptidase (Invadolysin), found in Drosophila melanogaster (Fruit fly).